Reading from the N-terminus, the 250-residue chain is Testis-expressed protein 101 (250 aa).

Residues 1–25 (MGACRIQYILLVFLLIASHWTLVQN) form the signal peptide. Residues Asn-45, Asn-110, Asn-134, and Asn-160 are each glycosylated (N-linked (GlcNAc...) asparagine). A UPAR/Ly6 domain is found at 141 to 215 (CPTCLALEPC…VKETCSYQSF (75 aa)). Residue Gly-224 is the site of GPI-anchor amidated glycine attachment. The propeptide at 225–250 (ASWMPTSLWVLELLLPALSLPLIYFP) is removed in mature form.

In terms of assembly, interacts with VAMP3. Interacts with LY6K. Interacts with DPEP3; co-localized on the cell surface of spermatocytes, spermatids, and testicular spermatozoa, co-localized only in cytoplasmic droplets of caput and corpus epididymal sperm. Interacts with ADAM5. In terms of processing, N-glycosylated; by high mannose and/or biantennary complex and/or certain types of hybrid oligosaccharides; possesses different oligosaccharides chains according to its subcellular localization in the testis. Sheds from membrane raft by ACE and released from the cell surface of epididymal sperm while it passes through the caput epididymis leading to disappearance of TEX101 on spermatozoa; is essential to produce fertile spermatozoa. In terms of tissue distribution, detected in testis.

Its subcellular location is the cell membrane. It is found in the membrane raft. The protein resides in the cytoplasmic vesicle. It localises to the secretory vesicle. The protein localises to the acrosome. Its subcellular location is the secreted. Functionally, plays a role in fertilization by controlling binding of sperm to zona pellucida and migration of spermatozoa into the oviduct. May play a role in signal transduction and promote protein tyrosine phosphorylation. The sequence is that of Testis-expressed protein 101 from Rattus norvegicus (Rat).